Here is a 286-residue protein sequence, read N- to C-terminus: Bark agglutinin I polypeptide B (286 aa).

The signal sequence occupies residues 1-31 (MASYKFKTQNSFLLLLSISFFFLLLLNKVNS). Asn-148 carries an N-linked (GlcNAc...) asparagine glycan. Residues Glu-157 and Asp-159 each coordinate Mn(2+). The Ca(2+) site is built by Asp-159, Asn-163, and Asp-167. 2 residues coordinate Mn(2+): Asp-167 and His-172.

It belongs to the leguminous lectin family. RPbAI is composed of two polypeptides, A and B, that associate into five different tetrameric isolectins. The A4 combination is the only one devoid of agglutination activity. Isoform B4 displays maximal agglutination activity. Mostly in the axial and ray parenchymal cells of the inner bark. Fewer in the axial and ray parenchymal cells of the xylem. Strong expression in bark. The lectin accumulates in the inner bark in autumn and winter and disappears in may.

Bark lectins are storage proteins that probably maintain stocks of nitrogen during dormant period. Self-aggregatable molecules that can bind their own carbohydrate side chains. They could also play a role in the plant's defense against phytophagous invertebrates or herbivorous higher animals. This Robinia pseudoacacia (Black locust) protein is Bark agglutinin I polypeptide B.